The chain runs to 165 residues: Glutamyl-tRNA(Gln) amidotransferase subunit F, mitochondrial (165 aa).

A mitochondrion-targeting transit peptide spans 1-19; it reads MKSILRSTTRNLITSSRRF.

This sequence belongs to the GatF family. As to quaternary structure, subunit of the heterotrimeric GatFAB amidotransferase (AdT) complex, composed of A, B and F subunits.

The protein localises to the mitochondrion inner membrane. It carries out the reaction L-glutamyl-tRNA(Gln) + L-glutamine + ATP + H2O = L-glutaminyl-tRNA(Gln) + L-glutamate + ADP + phosphate + H(+). In terms of biological role, allows the formation of correctly charged Gln-tRNA(Gln) through the transamidation of misacylated Glu-tRNA(Gln) in the mitochondria. The reaction takes place in the presence of glutamine and ATP through an activated gamma-phospho-Glu-tRNA(Gln). Required for proper protein synthesis within the mitochondrion. The protein is Glutamyl-tRNA(Gln) amidotransferase subunit F, mitochondrial of Candida albicans (strain WO-1) (Yeast).